A 144-amino-acid polypeptide reads, in one-letter code: UPF0178 protein Exig_1155 (144 aa).

Residues 110–144 (IRRAGGRTKGPKKRTRQEDASFEQSFSRLLTEKTD) are disordered. Positions 113–124 (AGGRTKGPKKRT) are enriched in basic residues.

This sequence belongs to the UPF0178 family.

This is UPF0178 protein Exig_1155 from Exiguobacterium sibiricum (strain DSM 17290 / CCUG 55495 / CIP 109462 / JCM 13490 / 255-15).